The primary structure comprises 610 residues: Scarecrow-like protein 11 (610 aa).

Disordered regions lie at residues 32 to 54, 98 to 159, and 186 to 220; these read NNLF…PPTV, QQSP…RRNK, and QEEE…HKTN. Composition is skewed to low complexity over residues 41–52 and 99–119; these read SQNQSSPNDSPP and QSPE…GDQD. Polar residues-rich tracts occupy residues 123-137 and 209-220; these read PSTT…SSGE and GSSNKSKTHKTN. In terms of domain architecture, GRAS spans 215-598; sequence KTHKTNTVDL…RVIYAFSCWK (384 aa). The leucine repeat I (LRI) stretch occupies residues 222-283; that stretch reads VDLRSLLTQC…ARITGNISPP (62 aa). The segment at 302-367 is VHIID; that stretch reads YKLFVHTCPI…GGPPMLRVTG (66 aa). The VHIID signature appears at 333–337; the sequence is LHIVD. The interval 383–415 is leucine repeat II (LRII); sequence ETGRRLKRFCDQFNVPFEFNFIAKKWETITLDE. Residues 424–520 are PFYRE; the sequence is TVVNCIHRLQ…RELLVRDAMS (97 aa). The tract at residues 523 to 598 is SAW; sequence SCEGAERFAR…RVIYAFSCWK (76 aa).

Belongs to the GRAS family. In terms of tissue distribution, highly expressed in roots and at lower levels in leaves and sepals. Expressed in siliques.

The protein localises to the nucleus. Its function is as follows. Probable transcription factor involved in plant development. The chain is Scarecrow-like protein 11 (SCL11) from Arabidopsis thaliana (Mouse-ear cress).